The sequence spans 356 residues: S-adenosylmethionine:tRNA ribosyltransferase-isomerase (356 aa).

The protein belongs to the QueA family. In terms of assembly, monomer.

It is found in the cytoplasm. It catalyses the reaction 7-aminomethyl-7-carbaguanosine(34) in tRNA + S-adenosyl-L-methionine = epoxyqueuosine(34) in tRNA + adenine + L-methionine + 2 H(+). It participates in tRNA modification; tRNA-queuosine biosynthesis. Transfers and isomerizes the ribose moiety from AdoMet to the 7-aminomethyl group of 7-deazaguanine (preQ1-tRNA) to give epoxyqueuosine (oQ-tRNA). In Shigella boydii serotype 18 (strain CDC 3083-94 / BS512), this protein is S-adenosylmethionine:tRNA ribosyltransferase-isomerase.